Here is a 1321-residue protein sequence, read N- to C-terminus: Adhesion G protein-coupled receptor A3 (1321 aa).

The N-terminal stretch at 1–33 is a signal peptide; that stretch reads MEPPGRRRGRAQPPLLLPLSLLALLALLGGGGG. The Extracellular segment spans residues 34 to 761; sequence GGAAALPAGC…YTQAASLLHP (728 aa). N-linked (GlcNAc...) asparagine glycosylation is found at asparagine 81 and asparagine 98. LRR repeat units follow at residues 82–103, 106–127, 130–151, and 154–175; these read RTVT…SFSG, LLER…AFWG, SLKR…IFRG, and NLVR…TFDY. N-linked (GlcNAc...) asparagine glycans are attached at residues asparagine 159, asparagine 206, asparagine 301, asparagine 332, asparagine 433, asparagine 453, and asparagine 592. An LRRCT domain is found at 187–237; that stretch reads EYLLCDCNILWMHRWVKEKNITVRDTRCVYPKSLQAQPVTGVKQELLTCDP. Residues 242 to 340 enclose the Ig-like domain; it reads PSFYMTPSHR…GNNTRTVDIV (99 aa). A disulfide bridge links cysteine 264 with cysteine 324. Residues 583–750 form the GAIN-B domain; sequence LDKQLSFKCN…AVLMDLTGSE (168 aa). The stretch at 594 to 620 is one LRR 5 repeat; that stretch reads SNTFSSLALKNTIVEASIQLPPSLFSP. N-linked (GlcNAc...) asparagine glycosylation is found at asparagine 652, asparagine 687, and asparagine 728. Residues 701–750 form a GPS region; that stretch reads AARWDFDLLNGQGGWKSDGCHILYSDENITTIQCYSLSNYAVLMDLTGSE. Cysteine 720 and cysteine 734 are disulfide-bonded. A helical transmembrane segment spans residues 762-782; it reads VVYTTAIILLLCLLAVIVSYI. Topologically, residues 783–796 are cytoplasmic; sequence YHHSLIRISLKSWH. The chain crosses the membrane as a helical span at residues 797–817; it reads MLVNLCFHIFLTCVVFVGGIT. The Extracellular segment spans residues 818 to 826; sequence QTRNASICQ. N-linked (GlcNAc...) asparagine glycosylation occurs at asparagine 821. Residues 827–847 traverse the membrane as a helical segment; the sequence is AVGIILHYSTLATVLWVGVTA. Residues 848–876 are Cytoplasmic-facing; that stretch reads RNIYKQVTKKAKRCQDPDEPPPPPRPMLR. The chain crosses the membrane as a helical span at residues 877–897; the sequence is FYLIGGGIPIIVCGITAAANI. The Extracellular portion of the chain corresponds to 898 to 919; that stretch reads KNYGSRPNAPYCWMAWEPSLGA. A helical membrane pass occupies residues 920–940; sequence FYGPASFITFVNCMYFLSIFI. The Cytoplasmic portion of the chain corresponds to 941–996; that stretch reads QLKRHPERKYELKEPTEEQQRLAANENGEINHQDSMSLSLISTSALENEHTFHSQL. Residues 997–1017 form a helical membrane-spanning segment; sequence LGASLTLLLYVALWMFGALAV. Residues 1018–1024 are Extracellular-facing; that stretch reads SLYYPLD. The chain crosses the membrane as a helical span at residues 1025-1045; that stretch reads LVFSFVFGATSLSFSAFFVVH. Topologically, residues 1046 to 1321 are cytoplasmic; sequence HCVNREDVRL…TGLWKHETTV (276 aa). The span at 1073-1083 shows a compositional bias: polar residues; sequence NVQPPNSNGTN. Disordered regions lie at residues 1073–1094, 1198–1219, 1231–1265, and 1294–1321; these read NVQP…NSSA, VEGS…GHSR, QYNP…KKDA, and SNGQ…ETTV. The span at 1233-1250 shows a compositional bias: polar residues; that stretch reads NPPQQDSSDACSTLPKSS. The PDZ-binding signature appears at 1319–1321; the sequence is TTV.

This sequence belongs to the G-protein coupled receptor 2 family. Adhesion G-protein coupled receptor (ADGR) subfamily. Interacts (via PDZ-binding motif) with DLG1.

It is found in the membrane. Orphan receptor that may have a role in planar cell polarity pathway. The sequence is that of Adhesion G protein-coupled receptor A3 from Homo sapiens (Human).